The chain runs to 490 residues: MTATETVRVRFCPSPTGTPHVGLVRTALFNWAYARHTGGTFVFRIEDTDAQRDSEESYLALLDALRWLGLDWDEGPEVGGPYGPYRQSQRAEIYRDVLARLLAAGEAYHAFSTPEEVEARHVAAGRNPKLGYDNFDRHLTDAQRAAYLAEGRQPVVRLRMPDDDLAWNDLVRGPVTFAAGSVPDFALTRASGDPLYTLVNPCDDALMKITHVLRGEDLLPSTPRQLALHQALIRIGVAERIPKFAHLPTVLGEGTKKLSKRDPQSNLFAHRDRGFIPEGLLNYLALLGWSIADDHDLFGLDEMVAAFDVADVNSSPARFDQKKADALNAEHIRMLDVGDFTVRLRDHLDTHGHHIALDEAAFAAAAELVQTRIVVLGDAWELLKFFNDDQYVIDPKAAAKELGPDGAAVLDAALAALTSATDWTAPLIEAALKDALIEGLALKPRKAFSPIRVAATGTTVSPPLFESLELLGRDRSMQRLRAARQLVGHA.

The 'HIGH' region signature appears at 13–23; sequence PSPTGTPHVGL. The 'KMSKS' region motif lies at 257–261; that stretch reads KLSKR. Lys-260 lines the ATP pocket.

This sequence belongs to the class-I aminoacyl-tRNA synthetase family. Glutamate--tRNA ligase type 1 subfamily. In terms of assembly, monomer.

It localises to the cytoplasm. It carries out the reaction tRNA(Glu) + L-glutamate + ATP = L-glutamyl-tRNA(Glu) + AMP + diphosphate. In terms of biological role, catalyzes the attachment of glutamate to tRNA(Glu) in a two-step reaction: glutamate is first activated by ATP to form Glu-AMP and then transferred to the acceptor end of tRNA(Glu). The polypeptide is Glutamate--tRNA ligase (Mycobacterium bovis (strain BCG / Pasteur 1173P2)).